Reading from the N-terminus, the 201-residue chain is ATP-dependent Clp protease proteolytic subunit (201 aa).

The active-site Nucleophile is the serine 98. Histidine 123 is a catalytic residue.

This sequence belongs to the peptidase S14 family. Fourteen ClpP subunits assemble into 2 heptameric rings which stack back to back to give a disk-like structure with a central cavity, resembling the structure of eukaryotic proteasomes.

Its subcellular location is the cytoplasm. It catalyses the reaction Hydrolysis of proteins to small peptides in the presence of ATP and magnesium. alpha-casein is the usual test substrate. In the absence of ATP, only oligopeptides shorter than five residues are hydrolyzed (such as succinyl-Leu-Tyr-|-NHMec, and Leu-Tyr-Leu-|-Tyr-Trp, in which cleavage of the -Tyr-|-Leu- and -Tyr-|-Trp bonds also occurs).. In terms of biological role, cleaves peptides in various proteins in a process that requires ATP hydrolysis. Has a chymotrypsin-like activity. Plays a major role in the degradation of misfolded proteins. The chain is ATP-dependent Clp protease proteolytic subunit from Rickettsia conorii (strain ATCC VR-613 / Malish 7).